A 952-amino-acid polypeptide reads, in one-letter code: Probable outer membrane protein pmp16 (952 aa).

The first 27 residues, 1 to 27 (MSKTPPKFLFYLGNFTACMFGMTPAVY), serve as a signal peptide directing secretion. Positions 646-952 (GDLATTPLWQ…HLQAGSTLKF (307 aa)) constitute an Autotransporter domain.

Belongs to the PMP outer membrane protein family.

Its subcellular location is the secreted. The protein resides in the cell wall. The protein localises to the cell outer membrane. The protein is Probable outer membrane protein pmp16 (pmp16) of Chlamydia pneumoniae (Chlamydophila pneumoniae).